A 239-amino-acid polypeptide reads, in one-letter code: Large ribosomal subunit protein uL1 (239 aa).

The protein belongs to the universal ribosomal protein uL1 family. As to quaternary structure, part of the 50S ribosomal subunit.

In terms of biological role, binds directly to 23S rRNA. The L1 stalk is quite mobile in the ribosome, and is involved in E site tRNA release. Protein L1 is also a translational repressor protein, it controls the translation of the L11 operon by binding to its mRNA. The sequence is that of Large ribosomal subunit protein uL1 from Rickettsia canadensis (strain McKiel).